We begin with the raw amino-acid sequence, 597 residues long: Elongation factor 4 (597 aa).

One can recognise a tr-type G domain in the interval 2–184; the sequence is NNIRNFSIIA…SLITKVPPPK (183 aa). Residues 14-19 and 131-134 each bind GTP; these read DHGKST and NKID.

The protein belongs to the TRAFAC class translation factor GTPase superfamily. Classic translation factor GTPase family. LepA subfamily.

The protein localises to the cell inner membrane. It catalyses the reaction GTP + H2O = GDP + phosphate + H(+). Functionally, required for accurate and efficient protein synthesis under certain stress conditions. May act as a fidelity factor of the translation reaction, by catalyzing a one-codon backward translocation of tRNAs on improperly translocated ribosomes. Back-translocation proceeds from a post-translocation (POST) complex to a pre-translocation (PRE) complex, thus giving elongation factor G a second chance to translocate the tRNAs correctly. Binds to ribosomes in a GTP-dependent manner. The sequence is that of Elongation factor 4 from Janthinobacterium sp. (strain Marseille) (Minibacterium massiliensis).